A 160-amino-acid polypeptide reads, in one-letter code: NADH-quinone oxidoreductase subunit I (160 aa).

4Fe-4S ferredoxin-type domains follow at residues 51-81 and 91-120; these read LRRYDDGEERCIACKLCEAICPAQAITIEAA and VRYDIDMTKCIYCGFCQEACPVDAIVEGPN. Residues Cys-61, Cys-64, Cys-67, Cys-71, Cys-100, Cys-103, Cys-106, and Cys-110 each contribute to the [4Fe-4S] cluster site.

Belongs to the complex I 23 kDa subunit family. As to quaternary structure, NDH-1 is composed of 14 different subunits. Subunits NuoA, H, J, K, L, M, N constitute the membrane sector of the complex. [4Fe-4S] cluster is required as a cofactor.

It localises to the cell inner membrane. It carries out the reaction a quinone + NADH + 5 H(+)(in) = a quinol + NAD(+) + 4 H(+)(out). Functionally, NDH-1 shuttles electrons from NADH, via FMN and iron-sulfur (Fe-S) centers, to quinones in the respiratory chain. The immediate electron acceptor for the enzyme in this species is believed to be ubiquinone. Couples the redox reaction to proton translocation (for every two electrons transferred, four hydrogen ions are translocated across the cytoplasmic membrane), and thus conserves the redox energy in a proton gradient. The sequence is that of NADH-quinone oxidoreductase subunit I from Anaplasma marginale (strain St. Maries).